Here is a 287-residue protein sequence, read N- to C-terminus: 3-methyl-2-oxobutanoate hydroxymethyltransferase (287 aa).

Mg(2+) is bound by residues Asp-67 and Asp-106. 3-methyl-2-oxobutanoate contacts are provided by residues 67–68 (DS), Asp-106, and Lys-136. Mg(2+) is bound at residue Glu-138. Residue Glu-204 is the Proton acceptor of the active site.

This sequence belongs to the PanB family. Homodecamer; pentamer of dimers. The cofactor is Mg(2+).

The protein localises to the cytoplasm. The enzyme catalyses 3-methyl-2-oxobutanoate + (6R)-5,10-methylene-5,6,7,8-tetrahydrofolate + H2O = 2-dehydropantoate + (6S)-5,6,7,8-tetrahydrofolate. It participates in cofactor biosynthesis; (R)-pantothenate biosynthesis; (R)-pantoate from 3-methyl-2-oxobutanoate: step 1/2. In terms of biological role, catalyzes the reversible reaction in which hydroxymethyl group from 5,10-methylenetetrahydrofolate is transferred onto alpha-ketoisovalerate to form ketopantoate. The chain is 3-methyl-2-oxobutanoate hydroxymethyltransferase from Streptomyces avermitilis (strain ATCC 31267 / DSM 46492 / JCM 5070 / NBRC 14893 / NCIMB 12804 / NRRL 8165 / MA-4680).